A 390-amino-acid chain; its full sequence is Ribonucleoside-diphosphate reductase subunit M2 (390 aa).

Position 20 is a phosphoserine (Ser-20). Thr-33 is modified (phosphothreonine). The short motif at Arg-49–Ile-51 is the Cy element. Fe cation is bound by residues Asp-139, Glu-170, and His-173. Tyr-177 is an active-site residue. The Fe cation site is built by Glu-233, Glu-267, and His-270.

Belongs to the ribonucleoside diphosphate reductase small chain family. As to quaternary structure, heterodimer of a large and a small subunit. Interacts (via Cy motif and when phosphorylated at Thr-33) with CCNF; the interaction occurs exclusively in G2 and early M. The cofactor is Fe cation. Post-translationally, phosphorylation on Ser-20 relieves the inhibitory effect on Wnt signaling. Phosphorylated on Thr-33 by CDK1 and CDK2; predominantly in G2 and M phase. Ubiquitinated by the SCF(CCNF) E3 ubiquitin-protein ligase complex; leading to its degradation by the proteasome.

It localises to the cytoplasm. The protein localises to the nucleus. It carries out the reaction a 2'-deoxyribonucleoside 5'-diphosphate + [thioredoxin]-disulfide + H2O = a ribonucleoside 5'-diphosphate + [thioredoxin]-dithiol. In terms of biological role, provides the precursors necessary for DNA synthesis. Catalyzes the biosynthesis of deoxyribonucleotides from the corresponding ribonucleotides. Inhibits Wnt signaling. The sequence is that of Ribonucleoside-diphosphate reductase subunit M2 (Rrm2) from Rattus norvegicus (Rat).